A 91-amino-acid polypeptide reads, in one-letter code: Acylphosphatase (91 aa).

The 87-residue stretch at 3-89 folds into the Acylphosphatase-like domain; sequence AKHLILSGRV…PAEPGFVKRA (87 aa). Active-site residues include Arg18 and Asn36.

It belongs to the acylphosphatase family.

It carries out the reaction an acyl phosphate + H2O = a carboxylate + phosphate + H(+). The protein is Acylphosphatase (acyP) of Acidiphilium cryptum (strain JF-5).